The following is a 290-amino-acid chain: Bifunctional protein FolD (290 aa).

NADP(+) contacts are provided by residues G164 to S166, S193, and I234.

The protein belongs to the tetrahydrofolate dehydrogenase/cyclohydrolase family. As to quaternary structure, homodimer.

The catalysed reaction is (6R)-5,10-methylene-5,6,7,8-tetrahydrofolate + NADP(+) = (6R)-5,10-methenyltetrahydrofolate + NADPH. It catalyses the reaction (6R)-5,10-methenyltetrahydrofolate + H2O = (6R)-10-formyltetrahydrofolate + H(+). Its pathway is one-carbon metabolism; tetrahydrofolate interconversion. Its function is as follows. Catalyzes the oxidation of 5,10-methylenetetrahydrofolate to 5,10-methenyltetrahydrofolate and then the hydrolysis of 5,10-methenyltetrahydrofolate to 10-formyltetrahydrofolate. This is Bifunctional protein FolD from Cytophaga hutchinsonii (strain ATCC 33406 / DSM 1761 / CIP 103989 / NBRC 15051 / NCIMB 9469 / D465).